We begin with the raw amino-acid sequence, 292 residues long: 4-hydroxy-tetrahydrodipicolinate synthase (292 aa).

Thr45 is a binding site for pyruvate. Tyr133 functions as the Proton donor/acceptor in the catalytic mechanism. Residue Lys161 is the Schiff-base intermediate with substrate of the active site. A pyruvate-binding site is contributed by Ile203.

This sequence belongs to the DapA family. As to quaternary structure, homotetramer; dimer of dimers.

It localises to the cytoplasm. It catalyses the reaction L-aspartate 4-semialdehyde + pyruvate = (2S,4S)-4-hydroxy-2,3,4,5-tetrahydrodipicolinate + H2O + H(+). It functions in the pathway amino-acid biosynthesis; L-lysine biosynthesis via DAP pathway; (S)-tetrahydrodipicolinate from L-aspartate: step 3/4. Functionally, catalyzes the condensation of (S)-aspartate-beta-semialdehyde [(S)-ASA] and pyruvate to 4-hydroxy-tetrahydrodipicolinate (HTPA). The sequence is that of 4-hydroxy-tetrahydrodipicolinate synthase from Salmonella typhi.